A 332-amino-acid polypeptide reads, in one-letter code: Glycerol-3-phosphate dehydrogenase [NAD(P)+] (332 aa).

Residues W11, R30, and K108 each coordinate NADPH. 3 residues coordinate sn-glycerol 3-phosphate: K108, G137, and S139. A141 serves as a coordination point for NADPH. Positions 192, 245, 255, 256, and 257 each coordinate sn-glycerol 3-phosphate. Residue K192 is the Proton acceptor of the active site. R256 provides a ligand contact to NADPH. 2 residues coordinate NADPH: V280 and E282.

Belongs to the NAD-dependent glycerol-3-phosphate dehydrogenase family.

The protein resides in the cytoplasm. It catalyses the reaction sn-glycerol 3-phosphate + NAD(+) = dihydroxyacetone phosphate + NADH + H(+). The enzyme catalyses sn-glycerol 3-phosphate + NADP(+) = dihydroxyacetone phosphate + NADPH + H(+). It participates in membrane lipid metabolism; glycerophospholipid metabolism. Functionally, catalyzes the reduction of the glycolytic intermediate dihydroxyacetone phosphate (DHAP) to sn-glycerol 3-phosphate (G3P), the key precursor for phospholipid synthesis. In Burkholderia orbicola (strain MC0-3), this protein is Glycerol-3-phosphate dehydrogenase [NAD(P)+].